Reading from the N-terminus, the 614-residue chain is Signal recognition particle receptor subunit alpha homolog (614 aa).

The interval 119–244 (EASAKQVKAP…DRSRDSPDDV (126 aa)) is disordered. Basic and acidic residues predominate over residues 149-160 (QDDKKPVEKRVN). A compositionally biased stretch (pro residues) spans 164 to 178 (APPPSKSQPSSPPTG). The span at 232 to 241 (ALLDRSRDSP) shows a compositional bias: basic and acidic residues. Phosphoserine occurs at positions 237 and 240. At Tyr-246 the chain carries Phosphotyrosine. Phosphoserine occurs at positions 268, 278, and 279. The segment covering 268 to 285 (SEDEADNEDASSEGEAEE) has biased composition (acidic residues). A disordered region spans residues 268–290 (SEDEADNEDASSEGEAEEQVQSK). Residues 396 to 613 (YTIIFCGVNG…NVNAVVNSLM (218 aa)) form an NG domain region. GTP contacts are provided by residues 402 to 409 (GVNGVGKS), 497 to 501 (DTAGR), and 565 to 568 (TKFD).

Belongs to the GTP-binding SRP family. As to quaternary structure, heterodimer of SrpRalpha and SrpRbeta. As to expression, in 8-9 hours embryos, expression is seen in a segmental pattern along embryonic ventral midline.

The protein localises to the endoplasmic reticulum membrane. Component of the SRP (signal recognition particle) receptor. Ensures, in conjunction with the signal recognition particle, the correct targeting of the nascent secretory proteins to the endoplasmic reticulum membrane system. Forms a guanosine 5'-triphosphate (GTP)-dependent complex with the SRP subunit Srp54. SRP receptor compaction and GTPase rearrangement drive SRP-mediated cotranslational protein translocation into the ER. May have a role in axonogenesis. The sequence is that of Signal recognition particle receptor subunit alpha homolog from Drosophila melanogaster (Fruit fly).